Reading from the N-terminus, the 319-residue chain is GPI-specific phospholipase A2-like PGAP3 (319 aa).

Positions 1–23 (MAGRTARLVLLAGAAALASGSQG) are cleaved as a signal peptide. Over 24-101 (DREPVYRDCV…GKWPFSRFLC (78 aa)) the chain is Lumenal. A glycan (N-linked (GlcNAc...) asparagine) is linked at asparagine 40. Residues 102–122 (FQEPASAVASFLNGLASLVML) traverse the membrane as a helical segment. Residues 123 to 135 (CRYRTSVPASSPM) are Cytoplasmic-facing. A helical membrane pass occupies residues 136–156 (YPTCVAFAWVSLNAWFWSTVF). Residues 157–169 (HTRDTDLTEKMDY) are Lumenal-facing. A helical transmembrane segment spans residues 170–190 (FCASTVILHSIYLCCVRTVGL). Residues 191-200 (QHPAMASAFR) lie on the Cytoplasmic side of the membrane. Residues 201–221 (ALLLLLLTAHVSYLSLIHFDY) traverse the membrane as a helical segment. The Lumenal segment spans residues 222–224 (GYN). A helical transmembrane segment spans residues 225 to 245 (MAANVAIGLLNAAWWLAWCLW). The Cytoplasmic segment spans residues 246–257 (NQRLPHVHKCVA). The chain crosses the membrane as a helical span at residues 258–278 (VVLLLQGLSLLELLDFPPLFW). Residues 279-281 (VLD) lie on the Lumenal side of the membrane. Residues 282–302 (AHAIWHISTIPVHVLFFSFLE) traverse the membrane as a helical segment. Residues 303-319 (DDSLYLLKESEAKVKLD) are Cytoplasmic-facing.

This sequence belongs to the PGAP3 family.

It localises to the golgi apparatus membrane. In terms of biological role, involved in the fatty acid remodeling steps of GPI-anchor maturation where the unsaturated acyl chain at sn-2 of inositol phosphate is replaced by a saturated stearoyl chain. May catalyze the first step of the fatty acid remodeling, by removing the unsaturated acyl chain at sn-2 of inositol phosphate, generating a lyso-GPI intermediate. The fatty acid remodeling steps is critical for the integration of GPI-APs into lipid rafts. The protein is GPI-specific phospholipase A2-like PGAP3 of Bos taurus (Bovine).